Here is an 810-residue protein sequence, read N- to C-terminus: Leucine--tRNA ligase (810 aa).

The short motif at 41-52 (PYPSGQGLHVGH) is the 'HIGH' region element. The 'KMSKS' region signature appears at 582–586 (KMSKS). Lys-585 is a binding site for ATP.

The protein belongs to the class-I aminoacyl-tRNA synthetase family.

It is found in the cytoplasm. The enzyme catalyses tRNA(Leu) + L-leucine + ATP = L-leucyl-tRNA(Leu) + AMP + diphosphate. This is Leucine--tRNA ligase from Oenococcus oeni (strain ATCC BAA-331 / PSU-1).